The sequence spans 319 residues: Probable ABC transporter permease protein MG189 homolog (319 aa).

The next 6 helical transmembrane spans lie at 41-61 (VVLCFFGLMVIFPFYLMLVVA), 98-118 (AIWINSLVTILSIILRLFFTV), 134-154 (LFWFIFLAVLILPESALLIGQ), 169-189 (PAIILGLTMPFVASVFSGFMF), 229-249 (TVSILTAFAAWNSYLWPLLLL), and 282-302 (NLKMAAAILAILPMFIVYFLF). Residues 99-302 (IWINSLVTIL…LPMFIVYFLF (204 aa)) form the ABC transmembrane type-1 domain.

Belongs to the binding-protein-dependent transport system permease family. MalFG subfamily.

It is found in the cell membrane. Probably part of a binding-protein-dependent transport system. Probably responsible for the translocation of the substrate across the membrane. This is Probable ABC transporter permease protein MG189 homolog from Mycoplasma pneumoniae (strain ATCC 29342 / M129 / Subtype 1) (Mycoplasmoides pneumoniae).